The following is a 697-amino-acid chain: Sentrin-specific protease (697 aa).

Residues 1 to 14 are compositionally biased toward basic and acidic residues; that stretch reads MSRRSDLSDKDSQS. 2 disordered regions span residues 1-47 and 365-387; these read MSRR…QGLG and SEES…SDSY. The Nuclear localization signal motif lies at 15 to 19; the sequence is RKRHW. A Nuclear localization signal motif is present at residues 462–467; it reads KVEKKK. A protease region spans residues 501–664; it reads IQICKKDLAT…VFSCQFGEWA (164 aa). Residues His585, Asp602, and Cys653 contribute to the active site.

This sequence belongs to the peptidase C48 family.

It localises to the nucleus envelope. Its function is as follows. Protease that deconjugates smo-1 from targeted proteins and may catalyze the processing of smo-1 to its mature form. The protein is Sentrin-specific protease (ulp-1) of Caenorhabditis elegans.